The chain runs to 538 residues: ATP synthase subunit beta 2 (538 aa).

Polar residues predominate over residues 1-10 (MADPQATNGT). Residues 1–30 (MADPQATNGTGAACAERDASDVGDVSDVGD) form a disordered region. 185–192 (GGAGVGKT) contributes to the ATP binding site. Over residues 494-505 (AAAREADARREA) the composition is skewed to basic and acidic residues. A disordered region spans residues 494–538 (AAAREADARREAAAAASVAGPGTTSGTTSDPASGSAEPQGARHGR). The segment covering 506 to 529 (AAAASVAGPGTTSGTTSDPASGSA) has biased composition (low complexity).

This sequence belongs to the ATPase alpha/beta chains family. F-type ATPases have 2 components, CF(1) - the catalytic core - and CF(0) - the membrane proton channel. CF(1) has five subunits: alpha(3), beta(3), gamma(1), delta(1), epsilon(1). CF(0) has three main subunits: a(1), b(2) and c(9-12). The alpha and beta chains form an alternating ring which encloses part of the gamma chain. CF(1) is attached to CF(0) by a central stalk formed by the gamma and epsilon chains, while a peripheral stalk is formed by the delta and b chains.

It localises to the cell inner membrane. The catalysed reaction is ATP + H2O + 4 H(+)(in) = ADP + phosphate + 5 H(+)(out). Its function is as follows. Produces ATP from ADP in the presence of a proton gradient across the membrane. The catalytic sites are hosted primarily by the beta subunits. The chain is ATP synthase subunit beta 2 from Burkholderia pseudomallei (strain K96243).